The chain runs to 181 residues: ATP synthase subunit b 2 (181 aa).

Positions 1–12 (MAEGHGTTAHTG) are enriched in low complexity. The disordered stretch occupies residues 1-20 (MAEGHGTTAHTGAEGGHKAP). Residues 33–53 (LVSLLIAFVALYLIVSKVALP) traverse the membrane as a helical segment.

The protein belongs to the ATPase B chain family. As to quaternary structure, F-type ATPases have 2 components, F(1) - the catalytic core - and F(0) - the membrane proton channel. F(1) has five subunits: alpha(3), beta(3), gamma(1), delta(1), epsilon(1). F(0) has three main subunits: a(1), b(2) and c(10-14). The alpha and beta chains form an alternating ring which encloses part of the gamma chain. F(1) is attached to F(0) by a central stalk formed by the gamma and epsilon chains, while a peripheral stalk is formed by the delta and b chains.

Its subcellular location is the cell inner membrane. Its function is as follows. F(1)F(0) ATP synthase produces ATP from ADP in the presence of a proton or sodium gradient. F-type ATPases consist of two structural domains, F(1) containing the extramembraneous catalytic core and F(0) containing the membrane proton channel, linked together by a central stalk and a peripheral stalk. During catalysis, ATP synthesis in the catalytic domain of F(1) is coupled via a rotary mechanism of the central stalk subunits to proton translocation. Functionally, component of the F(0) channel, it forms part of the peripheral stalk, linking F(1) to F(0). The b'-subunit is a diverged and duplicated form of b found in plants and photosynthetic bacteria. The sequence is that of ATP synthase subunit b 2 (atpF2) from Rhodopseudomonas palustris (strain BisA53).